The following is a 227-amino-acid chain: Endo-1,4-beta-xylanase 2 (227 aa).

Positions 1–36 (MVSIKSVLAAATAVSSALAAPFDFVPRDNSTALQAR) are cleaved as a signal peptide. N29 carries N-linked (GlcNAc...) asparagine glycosylation. In terms of domain architecture, GH11 spans 37–225 (QVTPNAEGWH…SSGESDIYVQ (189 aa)). E121 serves as the catalytic Nucleophile. Catalysis depends on E212, which acts as the Proton donor.

It belongs to the glycosyl hydrolase 11 (cellulase G) family.

Its subcellular location is the secreted. It catalyses the reaction Endohydrolysis of (1-&gt;4)-beta-D-xylosidic linkages in xylans.. Its pathway is glycan degradation; xylan degradation. Functionally, endo-1,4-beta-xylanase involved in the hydrolysis of xylan, a major structural heterogeneous polysaccharide found in plant biomass representing the second most abundant polysaccharide in the biosphere, after cellulose. This chain is Endo-1,4-beta-xylanase 2 (xyn2), found in Humicola insolens (Soft-rot fungus).